The following is a 322-amino-acid chain: tRNA-dihydrouridine synthase B (322 aa).

FMN is bound by residues 16–18 (PMA) and glutamine 70. Cysteine 100 (proton donor) is an active-site residue. Residues lysine 139, 200-202 (NGD), and 224-225 (GR) each bind FMN.

The protein belongs to the Dus family. DusB subfamily. Requires FMN as cofactor.

The enzyme catalyses a 5,6-dihydrouridine in tRNA + NAD(+) = a uridine in tRNA + NADH + H(+). It catalyses the reaction a 5,6-dihydrouridine in tRNA + NADP(+) = a uridine in tRNA + NADPH + H(+). In terms of biological role, catalyzes the synthesis of 5,6-dihydrouridine (D), a modified base found in the D-loop of most tRNAs, via the reduction of the C5-C6 double bond in target uridines. The chain is tRNA-dihydrouridine synthase B from Shewanella oneidensis (strain ATCC 700550 / JCM 31522 / CIP 106686 / LMG 19005 / NCIMB 14063 / MR-1).